The sequence spans 163 residues: Phosphopantetheine adenylyltransferase (163 aa).

Position 10 (Thr-10) interacts with substrate. ATP-binding positions include 10–11 and His-18; that span reads TF. Substrate is bound by residues Lys-42, Leu-74, and Arg-88. ATP-binding positions include 89–91, Glu-99, and 124–130; these read GLR and NSFISST.

The protein belongs to the bacterial CoaD family. As to quaternary structure, homohexamer. It depends on Mg(2+) as a cofactor.

Its subcellular location is the cytoplasm. It catalyses the reaction (R)-4'-phosphopantetheine + ATP + H(+) = 3'-dephospho-CoA + diphosphate. The protein operates within cofactor biosynthesis; coenzyme A biosynthesis; CoA from (R)-pantothenate: step 4/5. Functionally, reversibly transfers an adenylyl group from ATP to 4'-phosphopantetheine, yielding dephospho-CoA (dPCoA) and pyrophosphate. This Shewanella putrefaciens (strain CN-32 / ATCC BAA-453) protein is Phosphopantetheine adenylyltransferase.